The following is a 156-amino-acid chain: RNA polymerase sigma factor SigS (156 aa).

The Polymerase core binding motif lies at 29–44; that stretch reads EYYQLLLIKMWQLSQI. Residues 126–145 constitute a DNA-binding region (H-T-H motif); the sequence is QFEIAEIMSLSLSTIKLIKM.

It belongs to the sigma-70 factor family.

Its function is as follows. Sigma factors are initiation factors that promote the attachment of RNA polymerase to specific initiation sites and are then released. Sigma-S contributes to the protection against external stress, thus playing a role in cellular fitness and survival. The sequence is that of RNA polymerase sigma factor SigS (sigS) from Staphylococcus aureus (strain NCTC 8325 / PS 47).